A 227-amino-acid polypeptide reads, in one-letter code: Cytochrome c oxidase subunit 2 (227 aa).

At 1-14 the chain is on the mitochondrial intermembrane side; the sequence is MAYPFQLGLQDATS. Residues 15–45 traverse the membrane as a helical segment; sequence PIMEELTSFHDHTLMIVFLISSLVLYIILLM. Topologically, residues 46 to 59 are mitochondrial matrix; that stretch reads LTTKLTHTSTMDAQ. The chain crosses the membrane as a helical span at residues 60 to 87; it reads EVETIWTILPAVILILIALPSLRILYMM. The Mitochondrial intermembrane portion of the chain corresponds to 88-227; it reads DEINNPALTV…HFENWSASMI (140 aa). Cu cation contacts are provided by His-161, Cys-196, Glu-198, Cys-200, His-204, and Met-207. Glu-198 contacts Mg(2+).

The protein belongs to the cytochrome c oxidase subunit 2 family. As to quaternary structure, component of the cytochrome c oxidase (complex IV, CIV), a multisubunit enzyme composed of 14 subunits. The complex is composed of a catalytic core of 3 subunits MT-CO1, MT-CO2 and MT-CO3, encoded in the mitochondrial DNA, and 11 supernumerary subunits COX4I, COX5A, COX5B, COX6A, COX6B, COX6C, COX7A, COX7B, COX7C, COX8 and NDUFA4, which are encoded in the nuclear genome. The complex exists as a monomer or a dimer and forms supercomplexes (SCs) in the inner mitochondrial membrane with NADH-ubiquinone oxidoreductase (complex I, CI) and ubiquinol-cytochrome c oxidoreductase (cytochrome b-c1 complex, complex III, CIII), resulting in different assemblies (supercomplex SCI(1)III(2)IV(1) and megacomplex MCI(2)III(2)IV(2)). Found in a complex with TMEM177, COA6, COX18, COX20, SCO1 and SCO2. Interacts with TMEM177 in a COX20-dependent manner. Interacts with COX20. Interacts with COX16. Cu cation is required as a cofactor.

It localises to the mitochondrion inner membrane. It carries out the reaction 4 Fe(II)-[cytochrome c] + O2 + 8 H(+)(in) = 4 Fe(III)-[cytochrome c] + 2 H2O + 4 H(+)(out). In terms of biological role, component of the cytochrome c oxidase, the last enzyme in the mitochondrial electron transport chain which drives oxidative phosphorylation. The respiratory chain contains 3 multisubunit complexes succinate dehydrogenase (complex II, CII), ubiquinol-cytochrome c oxidoreductase (cytochrome b-c1 complex, complex III, CIII) and cytochrome c oxidase (complex IV, CIV), that cooperate to transfer electrons derived from NADH and succinate to molecular oxygen, creating an electrochemical gradient over the inner membrane that drives transmembrane transport and the ATP synthase. Cytochrome c oxidase is the component of the respiratory chain that catalyzes the reduction of oxygen to water. Electrons originating from reduced cytochrome c in the intermembrane space (IMS) are transferred via the dinuclear copper A center (CU(A)) of subunit 2 and heme A of subunit 1 to the active site in subunit 1, a binuclear center (BNC) formed by heme A3 and copper B (CU(B)). The BNC reduces molecular oxygen to 2 water molecules using 4 electrons from cytochrome c in the IMS and 4 protons from the mitochondrial matrix. In Anisomys imitator (Uneven-toothed rat), this protein is Cytochrome c oxidase subunit 2 (MT-CO2).